Reading from the N-terminus, the 102-residue chain is Large ribosomal subunit protein eL30 (102 aa).

This sequence belongs to the eukaryotic ribosomal protein eL30 family. Part of the 50S ribosomal subunit.

In Thermococcus kodakarensis (strain ATCC BAA-918 / JCM 12380 / KOD1) (Pyrococcus kodakaraensis (strain KOD1)), this protein is Large ribosomal subunit protein eL30.